Consider the following 500-residue polypeptide: Glycerol kinase (500 aa).

Thr-13 lines the ADP pocket. Residues Thr-13, Thr-14, and Ser-15 each coordinate ATP. Thr-13 contacts sn-glycerol 3-phosphate. Arg-17 lines the ADP pocket. 4 residues coordinate sn-glycerol 3-phosphate: Arg-83, Glu-84, Tyr-135, and Asp-244. Positions 83, 84, 135, 244, and 245 each coordinate glycerol. Positions 266 and 309 each coordinate ADP. ATP contacts are provided by Thr-266, Gly-309, Gln-313, and Gly-410. The ADP site is built by Gly-410 and Asn-414.

This sequence belongs to the FGGY kinase family.

The catalysed reaction is glycerol + ATP = sn-glycerol 3-phosphate + ADP + H(+). It participates in polyol metabolism; glycerol degradation via glycerol kinase pathway; sn-glycerol 3-phosphate from glycerol: step 1/1. Inhibited by fructose 1,6-bisphosphate (FBP). Its function is as follows. Key enzyme in the regulation of glycerol uptake and metabolism. Catalyzes the phosphorylation of glycerol to yield sn-glycerol 3-phosphate. The chain is Glycerol kinase from Burkholderia pseudomallei (strain K96243).